The primary structure comprises 431 residues: Enolase (431 aa).

Gln163 is a binding site for (2R)-2-phosphoglycerate. The active-site Proton donor is the Glu205. Mg(2+) contacts are provided by Asp242, Glu288, and Asp315. The (2R)-2-phosphoglycerate site is built by Lys340, Arg369, Ser370, and Lys391. Residue Lys340 is the Proton acceptor of the active site.

This sequence belongs to the enolase family. Mg(2+) is required as a cofactor.

The protein localises to the cytoplasm. Its subcellular location is the secreted. The protein resides in the cell surface. It catalyses the reaction (2R)-2-phosphoglycerate = phosphoenolpyruvate + H2O. It functions in the pathway carbohydrate degradation; glycolysis; pyruvate from D-glyceraldehyde 3-phosphate: step 4/5. Catalyzes the reversible conversion of 2-phosphoglycerate (2-PG) into phosphoenolpyruvate (PEP). It is essential for the degradation of carbohydrates via glycolysis. The sequence is that of Enolase from Bacillus cereus (strain ZK / E33L).